Consider the following 148-residue polypeptide: UPF0756 membrane protein ETA_17460 (148 aa).

The next 4 membrane-spanning stretches (helical) occupy residues 14–34, 51–71, 80–100, and 112–132; these read ALSY…LIVI, MTVG…SGTI, FLHW…WLGG, and VVGG…GVPV.

The protein belongs to the UPF0756 family.

The protein resides in the cell membrane. This Erwinia tasmaniensis (strain DSM 17950 / CFBP 7177 / CIP 109463 / NCPPB 4357 / Et1/99) protein is UPF0756 membrane protein ETA_17460.